The following is a 129-amino-acid chain: Glycine cleavage system H protein (129 aa).

Residues 24–106 (LLKIGVSEFA…IGEGWLVILK (83 aa)) form the Lipoyl-binding domain. Residue Lys-65 is modified to N6-lipoyllysine.

This sequence belongs to the GcvH family. In terms of assembly, the glycine cleavage system is composed of four proteins: P, T, L and H. (R)-lipoate is required as a cofactor.

Functionally, the glycine cleavage system catalyzes the degradation of glycine. The H protein shuttles the methylamine group of glycine from the P protein to the T protein. The protein is Glycine cleavage system H protein of Prochlorococcus marinus (strain MIT 9312).